Consider the following 311-residue polypeptide: Probable manganese-dependent inorganic pyrophosphatase (311 aa).

6 residues coordinate Mn(2+): H9, D13, D15, D75, H97, and D149.

The protein belongs to the PPase class C family. Mn(2+) serves as cofactor.

It is found in the cytoplasm. It catalyses the reaction diphosphate + H2O = 2 phosphate + H(+). The chain is Probable manganese-dependent inorganic pyrophosphatase from Lactobacillus delbrueckii subsp. bulgaricus (strain ATCC BAA-365 / Lb-18).